We begin with the raw amino-acid sequence, 64 residues long: Bubble protein (64 aa).

Cystine bridges form between C3/C30, C18/C38, C28/C54, and C49/C64.

It is found in the secreted. In terms of biological role, may act as a toxin. May recognize a molecule or part of a molecule with a negatively charged surface potential. This Penicillium brevicompactum protein is Bubble protein.